The chain runs to 51 residues: Insulin (51 aa).

3 disulfide bridges follow: cysteine 8-cysteine 37, cysteine 20-cysteine 50, and cysteine 36-cysteine 41.

It belongs to the insulin family. As to quaternary structure, heterodimer of a B chain and an A chain linked by two disulfide bonds.

The protein localises to the secreted. Functionally, insulin decreases blood glucose concentration. It increases cell permeability to monosaccharides, amino acids and fatty acids. It accelerates glycolysis, the pentose phosphate cycle, and glycogen synthesis in liver. This chain is Insulin (ins), found in Gadus morhua subsp. callarias (Baltic cod).